We begin with the raw amino-acid sequence, 361 residues long: UDP-N-acetylglucosamine--N-acetylmuramyl-(pentapeptide) pyrophosphoryl-undecaprenol N-acetylglucosamine transferase (361 aa).

Residues 11–13, Asn-120, Arg-161, Ser-188, and Gln-282 contribute to the UDP-N-acetyl-alpha-D-glucosamine site; that span reads TGG.

Belongs to the glycosyltransferase 28 family. MurG subfamily.

It localises to the cell inner membrane. It catalyses the reaction di-trans,octa-cis-undecaprenyl diphospho-N-acetyl-alpha-D-muramoyl-L-alanyl-D-glutamyl-meso-2,6-diaminopimeloyl-D-alanyl-D-alanine + UDP-N-acetyl-alpha-D-glucosamine = di-trans,octa-cis-undecaprenyl diphospho-[N-acetyl-alpha-D-glucosaminyl-(1-&gt;4)]-N-acetyl-alpha-D-muramoyl-L-alanyl-D-glutamyl-meso-2,6-diaminopimeloyl-D-alanyl-D-alanine + UDP + H(+). Its pathway is cell wall biogenesis; peptidoglycan biosynthesis. Functionally, cell wall formation. Catalyzes the transfer of a GlcNAc subunit on undecaprenyl-pyrophosphoryl-MurNAc-pentapeptide (lipid intermediate I) to form undecaprenyl-pyrophosphoryl-MurNAc-(pentapeptide)GlcNAc (lipid intermediate II). The sequence is that of UDP-N-acetylglucosamine--N-acetylmuramyl-(pentapeptide) pyrophosphoryl-undecaprenol N-acetylglucosamine transferase from Prochlorococcus marinus (strain MIT 9303).